Reading from the N-terminus, the 437-residue chain is Endoplasmic reticulum protein SC65 (437 aa).

A signal peptide spans methionine 1 to alanine 18. The N-linked (GlcNAc...) asparagine glycan is linked to asparagine 361. Acidic residues-rich tracts occupy residues aspartate 381 to methionine 413 and alanine 428 to alanine 437. Positions aspartate 381–alanine 437 are disordered.

This sequence belongs to the leprecan family. Interacts with PLOD1, P3H3 and PPIB. Identified in a complex with PLOD1 and P3H3. In terms of tissue distribution, detected in fibroblasts (at protein level). Detected in spleen, prostate, testis, ovary, colon, pancreas, kidney, placenta and heart.

Its subcellular location is the endoplasmic reticulum. Part of a complex composed of PLOD1, P3H3 and P3H4 that catalyzes hydroxylation of lysine residues in collagen alpha chains and is required for normal assembly and cross-linking of collagen fibrils. Required for normal bone density and normal skin stability via its role in hydroxylation of lysine residues in collagen alpha chains and in collagen fibril assembly. This Homo sapiens (Human) protein is Endoplasmic reticulum protein SC65.